The following is a 416-amino-acid chain: Formyl-CoA:oxalate CoA-transferase (416 aa).

Residues 17–18, Arg-38, 72–75, 96–98, His-104, and 137–140 each bind CoA; these read QS, LNTK, NFH, and KAYE. Asp-169 (nucleophile) is an active-site residue. 248-250 provides a ligand contact to substrate; sequence GGQ. Residue 273–275 participates in CoA binding; it reads QEQ.

This sequence belongs to the CoA-transferase III family. Frc subfamily. In terms of assembly, homodimer.

It catalyses the reaction formyl-CoA + oxalate = oxalyl-CoA + formate. It participates in metabolic intermediate degradation; oxalate degradation; CO(2) and formate from oxalate: step 1/2. Its function is as follows. Involved in the catabolism of oxalate and in the adapatation to low pH via the induction of the oxalate-dependent acid tolerance response (ATR). Catalyzes the transfer of the CoA moiety from formyl-CoA to oxalate. The chain is Formyl-CoA:oxalate CoA-transferase from Escherichia coli O17:K52:H18 (strain UMN026 / ExPEC).